The following is a 266-amino-acid chain: Regulatory protein RecX (266 aa).

The protein belongs to the RecX family.

The protein localises to the cytoplasm. Its function is as follows. Modulates RecA activity. The chain is Regulatory protein RecX from Leuconostoc citreum (strain KM20).